The primary structure comprises 266 residues: rRNA adenine N-6-methyltransferase (266 aa).

6 residues coordinate S-adenosyl-L-methionine: H14, T16, G41, E62, D87, and N103.

It belongs to the class I-like SAM-binding methyltransferase superfamily. rRNA adenine N(6)-methyltransferase family.

Its function is as follows. Involved in erythromycin resistance. This Bacteroides fragilis protein is rRNA adenine N-6-methyltransferase (ermFU).